Reading from the N-terminus, the 225-residue chain is uncharacterized protein (225 aa).

Residues 181–203 (INIFVVFMFIIYLLFYIISSTVF) form a helical membrane-spanning segment.

The protein resides in the cell membrane. This is an uncharacterized protein from Bacillus anthracis.